A 349-amino-acid chain; its full sequence is Hydroxymethylglutaryl-CoA synthase (349 aa).

Residues aspartate 30 and alanine 31 each coordinate (3S)-3-hydroxy-3-methylglutaryl-CoA. The Proton donor/acceptor role is filled by glutamate 82. Cysteine 114 and threonine 155 together coordinate (3S)-3-hydroxy-3-methylglutaryl-CoA. Catalysis depends on cysteine 114, which acts as the Acyl-thioester intermediate. A CoA-binding site is contributed by arginine 203. Threonine 205 and histidine 238 together coordinate (3S)-3-hydroxy-3-methylglutaryl-CoA. The active-site Proton donor/acceptor is the histidine 238. Lysine 243 is a CoA binding site. (3S)-3-hydroxy-3-methylglutaryl-CoA-binding residues include asparagine 270 and serine 300.

It belongs to the thiolase-like superfamily. Archaeal HMG-CoA synthase family. As to quaternary structure, interacts with acetoacetyl-CoA thiolase that catalyzes the precedent step in the pathway and with a DUF35 protein. The acetoacetyl-CoA thiolase/HMG-CoA synthase complex channels the intermediate via a fused CoA-binding site, which allows for efficient coupling of the endergonic thiolase reaction with the exergonic HMGCS reaction.

It catalyses the reaction acetoacetyl-CoA + acetyl-CoA + H2O = (3S)-3-hydroxy-3-methylglutaryl-CoA + CoA + H(+). It functions in the pathway metabolic intermediate biosynthesis; (R)-mevalonate biosynthesis; (R)-mevalonate from acetyl-CoA: step 2/3. In terms of biological role, catalyzes the condensation of acetyl-CoA with acetoacetyl-CoA to form 3-hydroxy-3-methylglutaryl-CoA (HMG-CoA). Functions in the mevalonate (MVA) pathway leading to isopentenyl diphosphate (IPP), a key precursor for the biosynthesis of isoprenoid compounds that are building blocks of archaeal membrane lipids. This is Hydroxymethylglutaryl-CoA synthase from Methanococcus maripaludis (strain C7 / ATCC BAA-1331).